Here is a 443-residue protein sequence, read N- to C-terminus: MFKIREKTNADHKVKYIVDVNEKNWNEAYQKKLNAAVKNVKIQGFRKGHVPYQEAIKHIDQIGLFDRAVNQLVQPIYLELVKQEKIKDSETVLEENPEVSVVEIDDKKLALSYSFETIPEVKVGDYLKINGFLSETPVKDEDVQTELVRIFKSAGKLVDKKEGATLEKGDIAFLDFSGEIDNKAFEGGKAKNYELEIGSNSFIPGFEDQMVGMKVGEKRDLNLTFPKDYHEKTYAGKPVLFKVKLNSIKEVQLPEMTVEKLNELMKTQYKNLDEAKEDIKKRMDRNQQEHANQMNTMLLTQFANEDCQFSHIPKSLLDREVNLLYQQFANQMQQIKMSVEDALKIQNQTKEQLYQRLTEQATRAIKLVLVLEEIGDLEKISVSEAEINQEIEERIKEISNNQELPKEQYDAIKNYFVTQKELIESMLTNKKVVDLIIKKNLAR.

The 86-residue stretch at 169–254 (GDIAFLDFSG…LNSIKEVQLP (86 aa)) folds into the PPIase FKBP-type domain.

This sequence belongs to the FKBP-type PPIase family. Tig subfamily.

The protein localises to the cytoplasm. It catalyses the reaction [protein]-peptidylproline (omega=180) = [protein]-peptidylproline (omega=0). Involved in protein export. Acts as a chaperone by maintaining the newly synthesized protein in an open conformation. Functions as a peptidyl-prolyl cis-trans isomerase. The protein is Trigger factor of Mycoplasmoides gallisepticum (strain R(low / passage 15 / clone 2)) (Mycoplasma gallisepticum).